The primary structure comprises 412 residues: [Pyruvate dehydrogenase (acetyl-transferring)] kinase isozyme 4, mitochondrial (412 aa).

Residues 138 to 368 (ILEYKDNCTV…DAIIYLKALS (231 aa)) form the Histidine kinase domain. ATP contacts are provided by residues 254–261 (ELFKNAMR), Asp-293, 312–313 (ST), and 329–334 (GFGYGL).

The protein belongs to the PDK/BCKDK protein kinase family. Homodimer. Interacts with the pyruvate dehydrogenase complex subunit DLAT, and is part of the multimeric pyruvate dehydrogenase complex that contains multiple copies of pyruvate dehydrogenase (E1), dihydrolipoamide acetyltransferase (DLAT, E2) and lipoamide dehydrogenase (DLD, E3). As to expression, ubiquitous; highest levels of expression in heart and skeletal muscle.

The protein resides in the mitochondrion matrix. It carries out the reaction L-seryl-[pyruvate dehydrogenase E1 alpha subunit] + ATP = O-phospho-L-seryl-[pyruvate dehydrogenase E1 alpha subunit] + ADP + H(+). Its function is as follows. Kinase that plays a key role in regulation of glucose and fatty acid metabolism and homeostasis via phosphorylation of the pyruvate dehydrogenase subunits PDHA1 and PDHA2. This inhibits pyruvate dehydrogenase activity, and thereby regulates metabolite flux through the tricarboxylic acid cycle, down-regulates aerobic respiration and inhibits the formation of acetyl-coenzyme A from pyruvate. Inhibition of pyruvate dehydrogenase decreases glucose utilization and increases fat metabolism in response to prolonged fasting and starvation. Plays an important role in maintaining normal blood glucose levels under starvation, and is involved in the insulin signaling cascade. Via its regulation of pyruvate dehydrogenase activity, plays an important role in maintaining normal blood pH and in preventing the accumulation of ketone bodies under starvation. In the fed state, mediates cellular responses to glucose levels and to a high-fat diet. Regulates both fatty acid oxidation and de novo fatty acid biosynthesis. Plays a role in the generation of reactive oxygen species. Protects detached epithelial cells against anoikis. Plays a role in cell proliferation via its role in regulating carbohydrate and fatty acid metabolism. The polypeptide is [Pyruvate dehydrogenase (acetyl-transferring)] kinase isozyme 4, mitochondrial (Pdk4) (Rattus norvegicus (Rat)).